The sequence spans 130 residues: C-X-C motif chemokine 5 (130 aa).

An N-terminal signal peptide occupies residues 1-37 (MSFQLRSSARIPSRSCSSFTLLAFLLLFTLPQHRAQA). 2 cysteine pairs are disulfide-bonded: Cys-50/Cys-76 and Cys-52/Cys-93.

Belongs to the intercrine alpha (chemokine CxC) family. In terms of assembly, monomer. Homodimer.

It is found in the secreted. Functionally, may participate in the recruitment of inflammatory cells by injured or infected tissue. This chain is C-X-C motif chemokine 5 (Cxcl5), found in Rattus norvegicus (Rat).